The chain runs to 361 residues: MALTRLLIKDFRNIESADLALAAGFNFLVGPNGSGKTSVLEAVYTLGHGRAFRSLQAGRVIRHECAEFVLHGRVDANEREASVGLSKSRQGDTKVRIDGTDGHKVAELAQMLPMQLITPEGFTLLNGGPKFRRAFLDWGCFHNEPGFFTAWSNLKRLLKQRNAALRQVSRYTQIRAWDQEIIPLAERISEWRAAYSDAIAADISATCALFLPEFALSFFFQRGWDKESDYGELLARQFERDRALTYTAVGPHKADFRIRADGTPVEDLLSRGQLKLLMCALRLAQGEFLTRQSGRRCLYLLDDFASELDTGRRRLLAERLKATQAQVFVSAVSAEQVADMVGEKGKMFRVEHGKIEVQPQD.

30–37 (GPNGSGKT) is a binding site for ATP.

The protein belongs to the RecF family.

The protein localises to the cytoplasm. Its function is as follows. The RecF protein is involved in DNA metabolism; it is required for DNA replication and normal SOS inducibility. RecF binds preferentially to single-stranded, linear DNA. It also seems to bind ATP. This Yersinia pseudotuberculosis serotype IB (strain PB1/+) protein is DNA replication and repair protein RecF.